Here is a 414-residue protein sequence, read N- to C-terminus: MSTKQVTCRYFLHGVCREGSRCLFSHDLTTSKPSTICKYYQRGACAYGDRCRYDHIKPPGRGSGAPADHSNRSSSSAGASAPGPGPPANTSKHLKKPLVLRDKALCSDSRPRVFSAESSELNECWEQRDDGAQKPHSYLEAIRSGLDASAAAAATAGTFPELQQTSPQICPFLAAGQCQYGESCPYLHGEMCEICRQHVLHPHDPEQRAAHEKKCMVAFEMDMERAFAVQQSQDKVCKICLDVVYEKSSPSERRFGILSSCAHTYCLNCIRQWRCVEQLHNQIRKSCPECRVVSEFVIPSIYWVEDQEQKNLLIEEFKSGVSKKACKYFDQGRGTCPFGGKCFYMHAYADGRRAEPDKPRKQLSAEGNVRFQNSVRLWDFIEEREHRSVPQLEDEVNDLGELFMQLSGASDAPH.

C3H1-type zinc fingers lie at residues 2–29 (STKQ…HDLT) and 31–58 (SKPS…HIKP). The interval 57–94 (KPPGRGSGAPADHSNRSSSSAGASAPGPGPPANTSKHL) is disordered. The segment covering 73–82 (SSSSAGASAP) has biased composition (low complexity). A C3H1-type 3 zinc finger spans residues 164–191 (QTSPQICPFLAAGQCQYGESCPYLHGEM). Positions 192 to 221 (CEICRQHVLHPHDPEQRAAHEKKCMVAFEM) are makorin-type Cys-His. The RING-type zinc finger occupies 237–291 (CKICLDVVYEKSSPSERRFGILSSCAHTYCLNCIRQWRCVEQLHNQIRKSCPECR). Residues 320–349 (GVSKKACKYFDQGRGTCPFGGKCFYMHAYA) form a C3H1-type 4 zinc finger.

It is found in the cytoplasm. The protein resides in the nucleus. It catalyses the reaction S-ubiquitinyl-[E2 ubiquitin-conjugating enzyme]-L-cysteine + [acceptor protein]-L-lysine = [E2 ubiquitin-conjugating enzyme]-L-cysteine + N(6)-ubiquitinyl-[acceptor protein]-L-lysine.. The protein operates within protein modification; protein ubiquitination. In terms of biological role, E3 ubiquitin ligase catalyzing the covalent attachment of ubiquitin moieties onto substrate proteins. Inhibits neurogenesis and axis formation during embryonic development by modulating the phosphatidylinositol 3-kinase (PI3K) pathway. Acts downstream of PI3K and akt1 to up-regulate gsk3b mRNA expression. In Danio rerio (Zebrafish), this protein is E3 ubiquitin-protein ligase makorin-2 (mkrn2).